The following is a 200-amino-acid chain: NADH-ubiquinone oxidoreductase 21.3 kDa subunit (200 aa).

3 helical membrane passes run 16-36 (IKSG…MASL), 48-68 (MHVF…GGIY), and 105-125 (FPVI…FAFS).

As to quaternary structure, complex I is composed of about 40 different subunits.

Its subcellular location is the mitochondrion inner membrane. The enzyme catalyses a ubiquinone + NADH + 5 H(+)(in) = a ubiquinol + NAD(+) + 4 H(+)(out). In terms of biological role, transfer of electrons from NADH to the respiratory chain. The immediate electron acceptor for the enzyme is believed to be ubiquinone. The protein is NADH-ubiquinone oxidoreductase 21.3 kDa subunit of Neurospora crassa (strain ATCC 24698 / 74-OR23-1A / CBS 708.71 / DSM 1257 / FGSC 987).